Reading from the N-terminus, the 206-residue chain is Putative NAD(P)H nitroreductase MhqN (206 aa).

Residues 11 to 13 (RRS), 68 to 70 (QYK), 157 to 158 (IG), Arg193, and Arg196 contribute to the FMN site.

Belongs to the nitroreductase family. In terms of assembly, homodimer. FMN is required as a cofactor.

Its subcellular location is the cytoplasm. Its function is as follows. Putative nitroreductase that may contribute to the degradation of aromatic compounds. This is Putative NAD(P)H nitroreductase MhqN (mhqN) from Bacillus subtilis (strain 168).